A 133-amino-acid polypeptide reads, in one-letter code: Thioredoxin-like protein CXXS1 (133 aa).

Positions 1-120 (MEIQQQKGVG…VKKMVDASAE (120 aa)) constitute a Thioredoxin domain.

This sequence belongs to the thioredoxin family.

In Oryza sativa subsp. japonica (Rice), this protein is Thioredoxin-like protein CXXS1.